The primary structure comprises 1331 residues: uncharacterized protein (1331 aa).

A run of 8 helical transmembrane segments spans residues Val373–Val393, Ala487–Ile507, Leu534–Ile554, Val579–Leu599, Leu653–Thr673, Val1206–Ile1226, Ile1255–Leu1275, and Ala1297–Leu1317.

The protein belongs to the ABC-4 integral membrane protein family.

The protein resides in the cell membrane. This is an uncharacterized protein from Mycoplasma genitalium (strain ATCC 33530 / DSM 19775 / NCTC 10195 / G37) (Mycoplasmoides genitalium).